The chain runs to 203 residues: SOSS complex subunit B1-A (203 aa).

The OB DNA-binding region spans 22–92 (IVLETGRVTK…TLYTGRGGDL (71 aa)). The tract at residues 110-203 (EPNPEYIAQQ…GKESRRTGKR (94 aa)) is disordered. Positions 118–140 (QQSQSKQGQQESGTGTNNHNSSS) are enriched in low complexity. Residues 149-182 (ENGNGSNSSGPPAHQSTAPAHSASGRITRSQPNH) show a composition bias toward polar residues.

It belongs to the SOSS-B family. SOSS-B1 subfamily. As to quaternary structure, component of the SOSS complex, composed of soss-b (soss-b1/nabp2 or soss-b2/nabp1), soss-a/ints3 and soss-c/inip. SOSS complexes containing soss-b1/nabp2 are more abundant than complexes containing soss-b2/nabp1.

The protein resides in the nucleus. Functionally, component of the SOSS complex, a multiprotein complex that functions downstream of the MRN complex to promote DNA repair and G2/M checkpoint. In the SOSS complex, acts as a sensor of single-stranded DNA that binds to single-stranded DNA. The SOSS complex associates with DNA lesions and influences diverse endpoints in the cellular DNA damage response including cell-cycle checkpoint activation, recombinational repair and maintenance of genomic stability. Required for efficient homologous recombination-dependent repair of double-strand breaks (DSBs). The polypeptide is SOSS complex subunit B1-A (nabp2-a) (Xenopus laevis (African clawed frog)).